The following is a 599-amino-acid chain: Elongation factor 4 (599 aa).

Residues 2 to 184 (KNIRNFSIIA…RLVRDIPPPQ (183 aa)) enclose the tr-type G domain. Residues 14 to 19 (DHGKST) and 131 to 134 (NKID) each bind GTP.

The protein belongs to the TRAFAC class translation factor GTPase superfamily. Classic translation factor GTPase family. LepA subfamily.

The protein resides in the cell inner membrane. It carries out the reaction GTP + H2O = GDP + phosphate + H(+). In terms of biological role, required for accurate and efficient protein synthesis under certain stress conditions. May act as a fidelity factor of the translation reaction, by catalyzing a one-codon backward translocation of tRNAs on improperly translocated ribosomes. Back-translocation proceeds from a post-translocation (POST) complex to a pre-translocation (PRE) complex, thus giving elongation factor G a second chance to translocate the tRNAs correctly. Binds to ribosomes in a GTP-dependent manner. This Salmonella paratyphi A (strain ATCC 9150 / SARB42) protein is Elongation factor 4.